The primary structure comprises 371 residues: Aminomethyltransferase (371 aa).

Belongs to the GcvT family. As to quaternary structure, the glycine cleavage system is composed of four proteins: P, T, L and H.

It catalyses the reaction N(6)-[(R)-S(8)-aminomethyldihydrolipoyl]-L-lysyl-[protein] + (6S)-5,6,7,8-tetrahydrofolate = N(6)-[(R)-dihydrolipoyl]-L-lysyl-[protein] + (6R)-5,10-methylene-5,6,7,8-tetrahydrofolate + NH4(+). In terms of biological role, the glycine cleavage system catalyzes the degradation of glycine. This chain is Aminomethyltransferase, found in Cellvibrio japonicus (strain Ueda107) (Pseudomonas fluorescens subsp. cellulosa).